A 141-amino-acid polypeptide reads, in one-letter code: Galactose-6-phosphate isomerase subunit LacA (141 aa).

It belongs to the LacAB/RpiB family. In terms of assembly, heteromultimeric protein consisting of LacA and LacB.

It carries out the reaction aldehydo-D-galactose 6-phosphate = keto-D-tagatose 6-phosphate. It functions in the pathway carbohydrate metabolism; D-galactose 6-phosphate degradation; D-tagatose 6-phosphate from D-galactose 6-phosphate: step 1/1. This is Galactose-6-phosphate isomerase subunit LacA from Streptococcus equi subsp. equi (strain 4047).